An 86-amino-acid chain; its full sequence is High affinity immunoglobulin epsilon receptor subunit gamma (86 aa).

Residues 1–18 (MYPAVVLLLLLLVEQAAA) form the signal peptide. Residues 19-23 (LGEPQ) lie on the Extracellular side of the membrane. The helical transmembrane segment at 24–44 (LCYILDAILFLYGIILTLLYC) threads the bilayer. Topologically, residues 45 to 86 (RLKIQVRKATVASYEKPDGIYTGLSTRNQETYETLKHEKPPQ) are cytoplasmic. The ITAM domain occupies 54-82 (TVASYEKPDGIYTGLSTRNQETYETLKHE). Tyr65 is subject to Phosphotyrosine. Phosphoserine is present on Ser69. A Phosphotyrosine modification is found at Tyr76. Thr78 is modified (phosphothreonine).

The protein belongs to the CD3Z/FCER1G family. IgE Fc receptor is a tetramer of an alpha chain, a beta chain, and two disulfide linked gamma chains. Associates with FCGR1A; forms a functional signaling complex. The signaling subunit of immunoglobulin gamma (IgG) Fc receptor complex. As a homodimer or a heterodimer of CD247 and FCER1G, associates with the ligand binding subunit FCGR3A to form a functional receptor complex. Associates with CLEC6A. Interacts with CLEC4E. Interacts (via ITAM domain) with SYK (via SH2 domains); activates SYK, enabling integrin-mediated activation of neutrophils and macrophages. Interacts with CSF2RB and recruits SYK in response to IL3 stimulation; this interaction is direct. Interacts with CD300LH; the interaction may be indirect. Interacts with CD300LD. Interacts with TARM1.

The protein resides in the cell membrane. Adapter protein containing an immunoreceptor tyrosine-based activation motif (ITAM) that transduces activation signals from various immunoreceptors. As a component of the high-affinity immunoglobulin E (IgE) receptor, mediates allergic inflammatory signaling in mast cells. As a constitutive component of interleukin-3 receptor complex, selectively mediates interleukin 4/IL4 production by basophils priming T-cells toward effector T-helper 2 subset. Associates with pattern recognition receptors CLEC4D and CLEC4E to form a functional signaling complex in myeloid cells. Binding of mycobacterial trehalose 6,6'-dimycolate (TDM) to this receptor complex leads to phosphorylation of ITAM, triggering activation of SYK, CARD9 and NF-kappa-B, consequently driving maturation of antigen-presenting cells and shaping antigen-specific priming of T-cells toward effector T-helper 1 and T-helper 17 cell subtypes. May function cooperatively with other activating receptors. Functionally linked to integrin beta-2/ITGB2-mediated neutrophil activation. Also involved in integrin alpha-2/ITGA2-mediated platelet activation. This chain is High affinity immunoglobulin epsilon receptor subunit gamma (FCER1G), found in Cavia porcellus (Guinea pig).